We begin with the raw amino-acid sequence, 211 residues long: Small ribosomal subunit protein uS3 (211 aa).

The KH type-2 domain occupies 38–106 (LRNFLKKRLY…EVYLNIQEVR (69 aa)).

The protein belongs to the universal ribosomal protein uS3 family. In terms of assembly, part of the 30S ribosomal subunit. Forms a tight complex with proteins S10 and S14.

In terms of biological role, binds the lower part of the 30S subunit head. Binds mRNA in the 70S ribosome, positioning it for translation. In Geobacter sp. (strain M21), this protein is Small ribosomal subunit protein uS3.